A 168-amino-acid chain; its full sequence is Transcriptional regulator MraZ (168 aa).

SpoVT-AbrB domains are found at residues 8-51 and 90-140; these read EYNQ…GGDR and ALNM…KADT.

The protein belongs to the MraZ family. Forms oligomers.

The protein resides in the cytoplasm. The protein localises to the nucleoid. This is Transcriptional regulator MraZ from Cereibacter sphaeroides (strain ATCC 17029 / ATH 2.4.9) (Rhodobacter sphaeroides).